A 287-amino-acid polypeptide reads, in one-letter code: Nucleotide-binding protein VV0445 (287 aa).

8 to 15 (GHSGAGKS) provides a ligand contact to ATP. 56–59 (DVRN) is a GTP binding site.

The protein belongs to the RapZ-like family.

Functionally, displays ATPase and GTPase activities. The sequence is that of Nucleotide-binding protein VV0445 from Vibrio vulnificus (strain YJ016).